A 206-amino-acid polypeptide reads, in one-letter code: Dehydration-responsive element-binding protein 2D (206 aa).

The interval 13 to 40 (ANKKQRTVQASSRKGCMRGKGGPDNASC) is disordered. The AP2/ERF DNA-binding region spans 41-98 (TYKGVRQRTWGKWVAEIREPNRGARLWLGTFDTSREAALAYDSAARKLYGPEAHLNLP). The disordered stretch occupies residues 102-139 (RSYPKTASSPASQTTPSSNTGGKSSSDSESPCSSNEMS). Low complexity predominate over residues 107–139 (TASSPASQTTPSSNTGGKSSSDSESPCSSNEMS).

Belongs to the AP2/ERF transcription factor family. ERF subfamily.

It is found in the nucleus. Its function is as follows. Putative transcriptional activator that binds specifically to the DNA sequence 5'-[AG]CCGAC-3'. Binding to the C-repeat/DRE element mediates high salinity-inducible transcription. This is Dehydration-responsive element-binding protein 2D (DREB2D) from Arabidopsis thaliana (Mouse-ear cress).